Reading from the N-terminus, the 86-residue chain is uncharacterized protein (86 aa).

This is an uncharacterized protein from Psittacid herpesvirus 1 (isolate Amazon parrot/-/97-0001/1997) (PsHV-1).